Consider the following 514-residue polypeptide: MRFELEGRIIFSKDVSEETQKDIIEVLENGDIFLKGVPEGKENEASKIEGYEFEGKDLKLNMTSGTYTRAHEGIVRLKKPIMEKVGRKHQIGIRDVAIDTYVVTITATPSKVAELKGLKVPECEVELDNEKIKILFKNLGDGELKRNIIDRAIKFVKTELDKQEQDLTFEVCKIAPGTIVSDYKATREITFDKDPTELAEPYGWVKRFPGRGQWFYTAPMAKLFRAFESLIVEECIEKVGFDECLFPKLIPLDVMYKMRYLEGLPEGMYYVCPPKREPEMFRDFVNEMMIKKEIPIDKLKTLLRDPGYVLAPAQCEPFYTFFDHELVDVDSPSKFFDKSGWTYRWEGGGAKGLDRVNEFLRGECVWMGSPEFVEKVRDDTLKYAEKLAEKLDLEYWTEVGDDPFYLEGRKNEDRGIEFPDVPKYEMRLWLPHVKDERKGVAVTSANIHGTHFVEGFGIKDYKDRKVWTGCTGYGLSRWLIGFLAQYGYNYEDWPEIIQKKVGKLPEIPKLITWP.

Alanine 313 is a binding site for L-serine. Cysteine 315 serves as a coordination point for Zn(2+). Residue arginine 344 coordinates L-serine. ATP-binding positions include 344-346 (RWE) and 355-356 (RV). Residue 361-363 (RGE) participates in L-serine binding. Residues glutamate 363 and cysteine 470 each contribute to the Zn(2+) site. Arginine 477 contributes to the ATP binding site.

It belongs to the class-II aminoacyl-tRNA synthetase family. Type-2 seryl-tRNA synthetase subfamily. Homodimer. The cofactor is Zn(2+).

It is found in the cytoplasm. The catalysed reaction is tRNA(Ser) + L-serine + ATP = L-seryl-tRNA(Ser) + AMP + diphosphate + H(+). It carries out the reaction tRNA(Sec) + L-serine + ATP = L-seryl-tRNA(Sec) + AMP + diphosphate + H(+). It participates in aminoacyl-tRNA biosynthesis; selenocysteinyl-tRNA(Sec) biosynthesis; L-seryl-tRNA(Sec) from L-serine and tRNA(Sec): step 1/1. In terms of biological role, catalyzes the attachment of serine to tRNA(Ser). Is also able to aminoacylate tRNA(Sec) with serine, to form the misacylated tRNA L-seryl-tRNA(Sec), which will be further converted into selenocysteinyl-tRNA(Sec). In Methanococcus maripaludis (strain DSM 14266 / JCM 13030 / NBRC 101832 / S2 / LL), this protein is Type-2 serine--tRNA ligase (serS).